The primary structure comprises 286 residues: Protease HtpX homolog (286 aa).

2 helical membrane passes run 6–26 (TCFLMVVLMLLFVFVGGYVGG) and 28–48 (QGMIIAFLVALGMNFFSYFFS). His130 contributes to the Zn(2+) binding site. Glu131 is a catalytic residue. A Zn(2+)-binding site is contributed by His134. The next 2 helical transmembrane spans lie at 140 to 160 (ILTGSIAAVMAGAIAMLANFA) and 178 to 198 (AIMLIIALIMPLAATIIQMAI). Glu203 contributes to the Zn(2+) binding site.

This sequence belongs to the peptidase M48B family. It depends on Zn(2+) as a cofactor.

It localises to the cell inner membrane. The chain is Protease HtpX homolog from Campylobacter curvus (strain 525.92).